A 271-amino-acid polypeptide reads, in one-letter code: Putative F-box protein L165 (271 aa).

The F-box domain maps to 4 to 49; it reads ICELFDDVILEIMNLLSDTDKINFMFCCSRFYYFIDLVYYNDIYDY. The segment at 251–271 is disordered; sequence NIPKIVPKNTHYRNSSKKYRY. A compositionally biased stretch (basic residues) spans 260-271; sequence THYRNSSKKYRY.

The sequence is that of Putative F-box protein L165 from Acanthamoeba polyphaga mimivirus (APMV).